Reading from the N-terminus, the 132-residue chain is Large-conductance mechanosensitive channel (132 aa).

Transmembrane regions (helical) follow at residues 11–31 (FISR…GAFG) and 75–95 (GSFL…FLLV).

The protein belongs to the MscL family. Homopentamer.

Its subcellular location is the cell inner membrane. Its function is as follows. Channel that opens in response to stretch forces in the membrane lipid bilayer. May participate in the regulation of osmotic pressure changes within the cell. This Synechococcus sp. (strain JA-2-3B'a(2-13)) (Cyanobacteria bacterium Yellowstone B-Prime) protein is Large-conductance mechanosensitive channel.